The chain runs to 350 residues: Homoserine O-succinyltransferase (350 aa).

The Acyl-thioester intermediate role is filled by cysteine 146. 2 residues coordinate substrate: lysine 167 and serine 196. Histidine 239 (proton acceptor) is an active-site residue. Glutamate 241 is an active-site residue. Arginine 253 contacts substrate.

The protein belongs to the MetA family.

The protein resides in the cytoplasm. The enzyme catalyses L-homoserine + succinyl-CoA = O-succinyl-L-homoserine + CoA. It functions in the pathway amino-acid biosynthesis; L-methionine biosynthesis via de novo pathway; O-succinyl-L-homoserine from L-homoserine: step 1/1. Its function is as follows. Transfers a succinyl group from succinyl-CoA to L-homoserine, forming succinyl-L-homoserine. This is Homoserine O-succinyltransferase from Cardiobacterium hominis (strain ATCC 15826 / DSM 8339 / NCTC 10426 / 6573).